Consider the following 268-residue polypeptide: Tryptophan synthase alpha chain (268 aa).

Catalysis depends on proton acceptor residues glutamate 49 and aspartate 60.

The protein belongs to the TrpA family. Tetramer of two alpha and two beta chains.

The catalysed reaction is (1S,2R)-1-C-(indol-3-yl)glycerol 3-phosphate + L-serine = D-glyceraldehyde 3-phosphate + L-tryptophan + H2O. It participates in amino-acid biosynthesis; L-tryptophan biosynthesis; L-tryptophan from chorismate: step 5/5. Functionally, the alpha subunit is responsible for the aldol cleavage of indoleglycerol phosphate to indole and glyceraldehyde 3-phosphate. This chain is Tryptophan synthase alpha chain, found in Yersinia pestis bv. Antiqua (strain Antiqua).